We begin with the raw amino-acid sequence, 524 residues long: Translation initiation factor eIF2B subunit delta (524 aa).

The tract at residues 1–155 (MAAVAVAVRE…EHTPADDPTL (155 aa)) is disordered. The residue at position 2 (alanine 2) is an N-acetylalanine. Composition is skewed to basic and acidic residues over residues 8–20 (VREE…KTEL) and 31–40 (LTQEEKLQLR). Position 12 is a phosphoserine (serine 12). Residues 41-51 (KEKKQQKKKRK) are compositionally biased toward basic residues. Phosphothreonine is present on threonine 86. Over residues 96–121 (SKAELRAERRAKQEAERALKQARKGE) the composition is skewed to basic and acidic residues. Positions 130-140 (CPSTAGETTSG) are enriched in polar residues. The tract at residues 171–180 (RKDYGSKVSL) is may bind the chemical integrated stress response (ISR) inhibitor ISRIB.

The protein belongs to the eIF-2B alpha/beta/delta subunits family. As to quaternary structure, component of the translation initiation factor 2B (eIF2B) complex which is a heterodecamer of two sets of five different subunits: alpha, beta, gamma, delta and epsilon. Subunits alpha, beta and delta comprise a regulatory subcomplex and subunits epsilon and gamma comprise a catalytic subcomplex. Within the complex, the hexameric regulatory complex resides at the center, with the two heterodimeric catalytic subcomplexes bound on opposite sides.

The protein localises to the cytoplasm. Its subcellular location is the cytosol. With respect to regulation, activated by the chemical integrated stress response (ISR) inhibitor ISRIB which stimulates guanine nucleotide exchange factor activity for both phosphorylated and unphosphorylated eIF2. Functionally, acts as a component of the translation initiation factor 2B (eIF2B) complex, which catalyzes the exchange of GDP for GTP on eukaryotic initiation factor 2 (eIF2) gamma subunit. Its guanine nucleotide exchange factor activity is repressed when bound to eIF2 complex phosphorylated on the alpha subunit, thereby limiting the amount of methionyl-initiator methionine tRNA available to the ribosome and consequently global translation is repressed. The sequence is that of Translation initiation factor eIF2B subunit delta (Eif2b4) from Mus musculus (Mouse).